Here is a 469-residue protein sequence, read N- to C-terminus: Squamosa promoter-binding-like protein 3 (469 aa).

The segment at 96–118 (SAEEHDKNMDKGKSKVDDTGTSR) is disordered. The span at 97–115 (AEEHDKNMDKGKSKVDDTG) shows a compositional bias: basic and acidic residues. Residues 179-256 (NPHCQVEGCN…HDHNARRRKP (78 aa)) form an SBP-type zinc finger. Residues Cys182, Cys187, Cys204, His207, Cys223, Cys226, His230, and Cys242 each contribute to the Zn(2+) site. A Bipartite nuclear localization signal motif is present at residues 239-255 (KRSCRRRLHDHNARRRK). Residues 446 to 469 (NDDDEDHLQLPKPSYDNSHYDQMN) are disordered. The span at 460-469 (YDNSHYDQMN) shows a compositional bias: polar residues.

As to expression, ubiquitous.

It localises to the nucleus. Trans-acting factor that binds specifically to the consensus nucleotide sequence 5'-TNCGTACAA-3'. May be involved in panicle development. The polypeptide is Squamosa promoter-binding-like protein 3 (SPL3) (Oryza sativa subsp. indica (Rice)).